A 30-amino-acid chain; its full sequence is Kalata-B10 (30 aa).

A cross-link (cyclopeptide (Gly-Asp)) is located at residues 1-30; the sequence is GLPTCGETCFGGTCNTPGCSCSSWPICTRD. Intrachain disulfides connect Cys-5–Cys-19, Cys-9–Cys-21, and Cys-14–Cys-27.

This sequence belongs to the cyclotide family. Moebius subfamily. In terms of processing, this peptide occurs in both cyclic and linear forms. The linear form contains unmodified Trp-24, the cyclic peptide occurs in two forms with unmodified Trp-24, and with Trp-24 oxidized to form oxindolylalanine. Oxidation is enhanced by exposure to sunlight.

Probably participates in a plant defense mechanism. This is Kalata-B10 from Oldenlandia affinis.